The sequence spans 154 residues: Resuscitation-promoting factor RpfD (154 aa).

The helical transmembrane segment at 21-41 (IVCTVFIETAVVATMFVALLG) threads the bilayer.

Belongs to the transglycosylase family. Rpf subfamily.

The protein localises to the cell membrane. Its function is as follows. Factor that stimulates resuscitation of dormant cells. Has peptidoglycan (PG) hydrolytic activity. PG fragments could either directly activate the resuscitation pathway of dormant bacteria or serve as a substrate for endogenous Rpf, resulting in low molecular weight products with resuscitation activity. The chain is Resuscitation-promoting factor RpfD (rpfD) from Mycobacterium tuberculosis (strain CDC 1551 / Oshkosh).